Consider the following 296-residue polypeptide: uncharacterized protein (296 aa).

Disordered regions lie at residues 1–45 (MSAT…LGEN) and 200–296 (EQVV…SESE). The segment covering 201–220 (QVVDDYPADSDDDTDAESDD) has biased composition (acidic residues). Residues 236–249 (SSVSSCGSFITDGS) are compositionally biased toward polar residues. Acidic residues predominate over residues 250 to 296 (GSEESEDSASDETDDSDFDTDELTSESEEEESESESESESESESESE).

This is an uncharacterized protein from Ictaluridae (bullhead catfishes).